A 487-amino-acid chain; its full sequence is DNA ligase (487 aa).

Residue K159 is the N6-AMP-lysine intermediate of the active site. R164, R182, and E217 together coordinate ATP. An a divalent metal cation-binding site is contributed by E217. The tract at residues 229–237 (EGLDFLFDA) is interaction with the sliding clamp. A divalent metal cation is bound at residue E344. 2 residues coordinate ATP: R359 and K365.

This sequence belongs to the ATP-dependent DNA ligase family. As to quaternary structure, interacts with the sliding clamp. The cofactor is a divalent metal cation.

It catalyses the reaction ATP + (deoxyribonucleotide)n-3'-hydroxyl + 5'-phospho-(deoxyribonucleotide)m = (deoxyribonucleotide)n+m + AMP + diphosphate.. DNA ligase, which is expressed in the early stage of lytic development, has been implicated in T4 DNA synthesis and genetic recombination. It may also play a role in T4 DNA repair. This is DNA ligase (30) from Enterobacteria phage T4 (Bacteriophage T4).